A 796-amino-acid polypeptide reads, in one-letter code: Transcription factor kayak (796 aa).

4 disordered regions span residues 109–132 (AYQQQQSKQSYNNNNNSNSNSNTS), 315–341 (VVNNNNNNNNNNNNNSSNNNNNNSNTV), 374–429 (FNCG…GSNG), and 442–490 (VGSA…RNKL). The segment covering 402 to 429 (TTDTSSAATDSTSYQNGGHMFGNNGSNG) has biased composition (low complexity). Residues 447–457 (RGTSSTSNNAT) are compositionally biased toward polar residues. The bZIP domain maps to 478–541 (EEKRRVRRER…HQLNFVLEAH (64 aa)). The tract at residues 480–499 (KRRVRRERNKLAAARCRKRR) is basic motif. The segment at 506–534 (LSEEVDGLLKKNEDLKKEIEILTNTRHQL) is leucine-zipper. The tract at residues 569–601 (SSGSNGSHHHNSNSNNSNNNNSNNNNNSNSNDS) is disordered. At Ser-621 the chain carries Phosphoserine. Disordered stretches follow at residues 642–661 (PHDAGLDSSSSLDQDGPPAA) and 774–796 (SSQNKHPLELPTPTSEPSKLVSL).

Belongs to the bZIP family. Fos subfamily. As to quaternary structure, homodimer. Heterodimer with Jra. The kay-Jra heterodimer binds more stably to the AP-1 site than either of the two proteins alone.

The protein resides in the nucleus. In terms of biological role, developmentally regulated transcription factor AP-1 binds and recognizes the enhancer DNA sequence: 5'-TGA[CG]TCA-3'. May play a role in the function or determination of a particular subset of cells in the developing embryo. It is able to carry out its function either independently of or in conjunction with Jra. The sequence is that of Transcription factor kayak from Drosophila grimshawi (Hawaiian fruit fly).